The primary structure comprises 332 residues: Cytoplasmic phosphatidylinositol transfer protein 1 (332 aa).

A phosphoserine mark is found at Ser119, Ser122, Ser270, and Ser274. Residues 272–281 (PSSAPSTPLS) show a composition bias toward low complexity. A disordered region spans residues 272–332 (PSSAPSTPLS…SEKPCRPKSE (61 aa)). Residue Thr278 is modified to Phosphothreonine.

Belongs to the PtdIns transfer protein family. PI transfer class IIB subfamily. As to expression, widely expressed in brain, with expression in the gray matters of pre- and postnatal brains. Weakly expressed in brain and is rather confined to the embryonic stage.

It is found in the cytoplasm. It localises to the nucleus. It catalyses the reaction a 1,2-diacyl-sn-glycero-3-phospho-(1D-myo-inositol)(in) = a 1,2-diacyl-sn-glycero-3-phospho-(1D-myo-inositol)(out). The enzyme catalyses a 1,2-diacyl-sn-glycero-3-phosphate(in) = a 1,2-diacyl-sn-glycero-3-phosphate(out). Functionally, catalyzes the transfer of phosphatidylinositol (PI) and phosphatidic acid (PA) between membranes. Binds PA derived from the phospholipase D signaling pathway and among the cellular PA species, preferably binds to the C16:0/16:1 and C16:1/18:1 PA species. In terms of biological role, specifically binds to phosphatidylinositol but not to other phospholipids and may play a role in the phosphoinositide-mediated signaling in the neural development. This chain is Cytoplasmic phosphatidylinositol transfer protein 1 (Pitpnc1), found in Mus musculus (Mouse).